Reading from the N-terminus, the 127-residue chain is Large ribosomal subunit protein bL17 (127 aa).

Belongs to the bacterial ribosomal protein bL17 family. In terms of assembly, part of the 50S ribosomal subunit. Contacts protein L32.

This is Large ribosomal subunit protein bL17 from Aeromonas hydrophila subsp. hydrophila (strain ATCC 7966 / DSM 30187 / BCRC 13018 / CCUG 14551 / JCM 1027 / KCTC 2358 / NCIMB 9240 / NCTC 8049).